Here is a 270-residue protein sequence, read N- to C-terminus: Elongation factor Ts (270 aa).

The segment at 81-84 is involved in Mg(2+) ion dislocation from EF-Tu; that stretch reads TDFV.

It belongs to the EF-Ts family.

The protein resides in the cytoplasm. In terms of biological role, associates with the EF-Tu.GDP complex and induces the exchange of GDP to GTP. It remains bound to the aminoacyl-tRNA.EF-Tu.GTP complex up to the GTP hydrolysis stage on the ribosome. The chain is Elongation factor Ts from Wigglesworthia glossinidia brevipalpis.